A 221-amino-acid chain; its full sequence is Small ribosomal subunit protein eS8 (221 aa).

Disordered stretches follow at residues 1–41 (MGIS…LSSN) and 128–169 (TPAA…TLDP). Basic residues predominate over residues 8-26 (MHKRRATGGKQKAWRKKRK). Over residues 146-169 (EETKKSNHVTRKLEKRKEGRTLDP) the composition is skewed to basic and acidic residues.

This sequence belongs to the eukaryotic ribosomal protein eS8 family.

In Zea mays (Maize), this protein is Small ribosomal subunit protein eS8 (RPS8).